A 192-amino-acid chain; its full sequence is Putative acetyltransferase SH0499 (192 aa).

Belongs to the transferase hexapeptide repeat family.

The protein is Putative acetyltransferase SH0499 of Staphylococcus haemolyticus (strain JCSC1435).